The sequence spans 270 residues: MSLSFLLLLFLSHLILSAWAHGEKHLAPKGQPGPAATGRNPAGASSSRSSRGTTSSSSSSVSSSHSASLGNQGSGLEQSSFQWSPSGRRTGSLYCRVGIGFHLQIYPDGKVNGSHEANMLSILEIFAVSQGIVGIRGVFSNKFLAMSKKGKLHASAKFTDDCKFRERFQENSYNTYASAIHRTEPAGREWYVALNKRGKAKRGCSPRVKPQHISTHFLPRFKQLEQPELSFTVTVPEKKKPPSPVKPKVPLSAPRKSPNTVKYRLKFRFG.

The signal sequence occupies residues 1–20 (MSLSFLLLLFLSHLILSAWA). The segment at 26–83 (LAPKGQPGPAATGRNPAGASSSRSSRGTTSSSSSSVSSSHSASLGNQGSGLEQSSFQW) is disordered. The span at 43 to 68 (GASSSRSSRGTTSSSSSSVSSSHSAS) shows a compositional bias: low complexity. The span at 69-83 (LGNQGSGLEQSSFQW) shows a compositional bias: polar residues. A glycan (N-linked (GlcNAc...) asparagine) is linked at asparagine 112. Residues 236–257 (PEKKKPPSPVKPKVPLSAPRKS) form a disordered region.

It belongs to the heparin-binding growth factors family. Interacts with FGFR1 and FGFR2. Affinity between fibroblast growth factors (FGFs) and their receptors is increased by heparan sulfate glycosaminoglycans that function as coreceptors. Expressed in skin.

The protein localises to the secreted. In terms of biological role, plays an important role in the regulation of cell proliferation and cell differentiation. Required for normal regulation of the hair growth cycle. Functions as an inhibitor of hair elongation by promoting progression from anagen, the growth phase of the hair follicle, into catagen the apoptosis-induced regression phase. The sequence is that of Fibroblast growth factor 5 (FGF5) from Felis catus (Cat).